A 207-amino-acid chain; its full sequence is Ribonuclease HII (207 aa).

An RNase H type-2 domain is found at Glu-18–Lys-206. Asp-24, Glu-25, and Asp-115 together coordinate a divalent metal cation.

This sequence belongs to the RNase HII family. Requires Mn(2+) as cofactor. It depends on Mg(2+) as a cofactor.

The protein resides in the cytoplasm. The enzyme catalyses Endonucleolytic cleavage to 5'-phosphomonoester.. In terms of biological role, endonuclease that specifically degrades the RNA of RNA-DNA hybrids. This Hydrogenovibrio crunogenus (strain DSM 25203 / XCL-2) (Thiomicrospira crunogena) protein is Ribonuclease HII.